A 1020-amino-acid chain; its full sequence is Protein translocase subunit SecA (1020 aa).

ATP-binding positions include Gln143, Gly161–Thr165, and Asp661. The disordered stretch occupies residues Ser974–Pro1020. Zn(2+)-binding residues include Cys1004, Cys1006, Cys1015, and His1016.

Belongs to the SecA family. Monomer and homodimer. Part of the essential Sec protein translocation apparatus which comprises SecA, SecYEG and auxiliary proteins SecDF. Other proteins may also be involved. The cofactor is Zn(2+).

The protein localises to the cell inner membrane. The protein resides in the cytoplasm. The catalysed reaction is ATP + H2O + cellular proteinSide 1 = ADP + phosphate + cellular proteinSide 2.. In terms of biological role, part of the Sec protein translocase complex. Interacts with the SecYEG preprotein conducting channel. Has a central role in coupling the hydrolysis of ATP to the transfer of proteins into and across the cell membrane, serving as an ATP-driven molecular motor driving the stepwise translocation of polypeptide chains across the membrane. This is Protein translocase subunit SecA from Chlorobium phaeovibrioides (strain DSM 265 / 1930) (Prosthecochloris vibrioformis (strain DSM 265)).